We begin with the raw amino-acid sequence, 702 residues long: Phosphoglycerol transferase I (702 aa).

Helical transmembrane passes span 5–24, 73–95, and 102–124; these read LLVSLLLLLWLLVASPRLAW, GYIAVFVGMLLLSLSPLLLVRIR, and GGGAVFAGFVGMLLVGIAASPLY.

Belongs to the OpgB family.

Its subcellular location is the cell inner membrane. It carries out the reaction a phosphatidylglycerol + a membrane-derived-oligosaccharide D-glucose = a 1,2-diacyl-sn-glycerol + a membrane-derived-oligosaccharide 6-(glycerophospho)-D-glucose.. Its pathway is glycan metabolism; osmoregulated periplasmic glucan (OPG) biosynthesis. Transfers a phosphoglycerol residue from phosphatidylglycerol to the membrane-bound nascent glucan backbones. The chain is Phosphoglycerol transferase I from Xanthomonas axonopodis pv. citri (strain 306).